A 339-amino-acid chain; its full sequence is D-erythrose-4-phosphate dehydrogenase (339 aa).

Position 12–13 (12–13) interacts with NAD(+); sequence RI. Substrate is bound by residues 154–156, Arg-200, 213–214, and Arg-236; these read SCT and TK. The active-site Nucleophile is the Cys-155. Asn-318 is a binding site for NAD(+).

The protein belongs to the glyceraldehyde-3-phosphate dehydrogenase family. Epd subfamily. As to quaternary structure, homotetramer.

It localises to the cytoplasm. The catalysed reaction is D-erythrose 4-phosphate + NAD(+) + H2O = 4-phospho-D-erythronate + NADH + 2 H(+). It functions in the pathway cofactor biosynthesis; pyridoxine 5'-phosphate biosynthesis; pyridoxine 5'-phosphate from D-erythrose 4-phosphate: step 1/5. Catalyzes the NAD-dependent conversion of D-erythrose 4-phosphate to 4-phosphoerythronate. In Enterobacter sp. (strain 638), this protein is D-erythrose-4-phosphate dehydrogenase.